The following is a 648-amino-acid chain: Replication restart protein PriA (648 aa).

The region spanning 131-297 (TILNESNKPT…EIGKYQLVTL (167 aa)) is the Helicase ATP-binding domain. Residue 144–151 (GVTGSGKT) coordinates ATP. Residues 240-243 (DEEH) carry the DEAH box motif. The Zn(2+) site is built by Cys358, Cys361, Cys367, Cys370, Cys385, Cys388, Cys398, and Cys401. Residues 393–548 (KIFSSCPECL…SFFANELEIR (156 aa)) form the Helicase C-terminal domain.

It belongs to the helicase family. PriA subfamily. Component of the replication restart primosome. Requires Zn(2+) as cofactor.

It catalyses the reaction Couples ATP hydrolysis with the unwinding of duplex DNA by translocating in the 3'-5' direction.. The enzyme catalyses ATP + H2O = ADP + phosphate + H(+). Initiates the restart of stalled replication forks, which reloads the replicative helicase on sites other than the origin of replication. Recognizes and binds to abandoned replication forks and remodels them to uncover a helicase loading site. Promotes assembly of the primosome at these replication forks. This chain is Replication restart protein PriA, found in Rickettsia conorii (strain ATCC VR-613 / Malish 7).